The primary structure comprises 449 residues: Exodeoxyribonuclease 7 large subunit (449 aa).

Belongs to the XseA family. As to quaternary structure, heterooligomer composed of large and small subunits.

Its subcellular location is the cytoplasm. The enzyme catalyses Exonucleolytic cleavage in either 5'- to 3'- or 3'- to 5'-direction to yield nucleoside 5'-phosphates.. Its function is as follows. Bidirectionally degrades single-stranded DNA into large acid-insoluble oligonucleotides, which are then degraded further into small acid-soluble oligonucleotides. In Aliivibrio fischeri (strain MJ11) (Vibrio fischeri), this protein is Exodeoxyribonuclease 7 large subunit.